A 464-amino-acid polypeptide reads, in one-letter code: NADH-quinone oxidoreductase subunit N (464 aa).

Transmembrane regions (helical) follow at residues 6 to 26 (FLYIVPEITVLGSALALLVLG), 36 to 56 (SMSLISVAIAAVLACKELIYF), 75 to 95 (CLARAVVAVSGLFAFLLFFFA), 101 to 121 (YEFAVLMLFAFLGTLTLVEAH), 123 to 143 (FLSFYLSFELIGFASYILVCF), 157 to 177 (FFVLGALSSCIMLYGISLVYG), 197 to 217 (LGATFGCALVLVGLLFKLGAV), 231 to 253 (PTVAVVFFTIVTKTAMVLVFAGL), 257 to 279 (VVIPITGFVWSMLLMAALSMVVG), 293 to 313 (FAYANIGHIGYVLAGMSTGVV), 317 to 337 (PVLFYVVTYLLINVWIFTVLL), 360 to 380 (AFTFVAALLASAGLPPFSGFF), 395 to 415 (FGVPTLVCVVFLCLTSIIPCF), and 439 to 459 (NVGLSIMAFVAVTLSLVVVLL).

It belongs to the complex I subunit 2 family. NDH-1 is composed of 14 different subunits. Subunits NuoA, H, J, K, L, M, N constitute the membrane sector of the complex.

Its subcellular location is the cell inner membrane. It carries out the reaction a quinone + NADH + 5 H(+)(in) = a quinol + NAD(+) + 4 H(+)(out). Its function is as follows. NDH-1 shuttles electrons from NADH, via FMN and iron-sulfur (Fe-S) centers, to quinones in the respiratory chain. The immediate electron acceptor for the enzyme in this species is believed to be ubiquinone. Couples the redox reaction to proton translocation (for every two electrons transferred, four hydrogen ions are translocated across the cytoplasmic membrane), and thus conserves the redox energy in a proton gradient. In Anaplasma phagocytophilum (strain HZ), this protein is NADH-quinone oxidoreductase subunit N.